Here is a 96-residue protein sequence, read N- to C-terminus: Seed trypsin/chymotrypsin inhibitor IVA (96 aa).

An N-terminal signal peptide occupies residues 1-10 (LSFAANVVNA). A propeptide spanning residues 11–24 (RFDSTSFITQVLSN) is cleaved from the precursor. Disulfide bonds link Cys-32-Cys-85, Cys-33-Cys-48, Cys-36-Cys-81, Cys-38-Cys-46, Cys-55-Cys-62, Cys-59-Cys-74, and Cys-64-Cys-72. Residues 88 to 96 (SEVEEVIKN) constitute a propeptide, removed in PSTI I.

This sequence belongs to the Bowman-Birk serine protease inhibitor family. Seed.

In terms of biological role, inhibitor of trypsin and of chymotrypsin. May function as a natural phytochemical defense against predators. The sequence is that of Seed trypsin/chymotrypsin inhibitor IVA (TI1236) from Pisum sativum (Garden pea).